The sequence spans 153 residues: 6,7-dimethyl-8-ribityllumazine synthase (153 aa).

5-amino-6-(D-ribitylamino)uracil-binding positions include F22, 56–58 (AFE), and 80–82 (AVI). Residue 85–86 (GT) participates in (2S)-2-hydroxy-3-oxobutyl phosphate binding. H88 acts as the Proton donor in catalysis. F113 contacts 5-amino-6-(D-ribitylamino)uracil. R127 is a (2S)-2-hydroxy-3-oxobutyl phosphate binding site.

This sequence belongs to the DMRL synthase family. Forms an icosahedral capsid composed of 60 subunits, arranged as a dodecamer of pentamers.

It catalyses the reaction (2S)-2-hydroxy-3-oxobutyl phosphate + 5-amino-6-(D-ribitylamino)uracil = 6,7-dimethyl-8-(1-D-ribityl)lumazine + phosphate + 2 H2O + H(+). The protein operates within cofactor biosynthesis; riboflavin biosynthesis; riboflavin from 2-hydroxy-3-oxobutyl phosphate and 5-amino-6-(D-ribitylamino)uracil: step 1/2. Functionally, catalyzes the formation of 6,7-dimethyl-8-ribityllumazine by condensation of 5-amino-6-(D-ribitylamino)uracil with 3,4-dihydroxy-2-butanone 4-phosphate. This is the penultimate step in the biosynthesis of riboflavin. This Hydrogenovibrio crunogenus (strain DSM 25203 / XCL-2) (Thiomicrospira crunogena) protein is 6,7-dimethyl-8-ribityllumazine synthase.